We begin with the raw amino-acid sequence, 461 residues long: Probable lipid II flippase MurJ (461 aa).

12 helical membrane-spanning segments follow: residues 5-25 (ILGA…PNLF), 51-71 (FASL…LLVA), 96-116 (IVAI…LGAL), 123-143 (FFAS…ALLI), 156-176 (LSYG…YPLV), 229-249 (IASF…VSYL), 258-278 (LPLA…IAIA), 293-313 (KAWF…IMLS), 337-357 (VFSL…FSLW), 372-392 (LISL…LGVL), 402-422 (GLFL…LGII), and 429-449 (LVIL…KSWV).

This sequence belongs to the MurJ/MviN family.

The protein localises to the cell inner membrane. It functions in the pathway cell wall biogenesis; peptidoglycan biosynthesis. Its function is as follows. Involved in peptidoglycan biosynthesis. Transports lipid-linked peptidoglycan precursors from the inner to the outer leaflet of the cytoplasmic membrane. In Helicobacter pylori (strain ATCC 700392 / 26695) (Campylobacter pylori), this protein is Probable lipid II flippase MurJ.